The chain runs to 1397 residues: Centlein (1397 aa).

Disordered stretches follow at residues 1 to 43 and 56 to 76; these read MAAR…GLAG and LWRGEEGSGGRRGSGRAGAAV. The residue at position 2 (alanine 2) is an N-acetylalanine. Phosphoserine occurs at positions 5, 9, and 22. 2 coiled-coil regions span residues 95 to 126 and 405 to 481; these read EEAKATRSQLLEEELSSLKEELALCQADKEFV and VVNL…KLMA. Disordered regions lie at residues 422 to 449 and 485 to 521; these read LKEKLEESQGTAPSLSPHDSDSSHSGKA and CDQDFSEKGTEGKHKEPPVKRSRSLSPKSSFMGSEEL. Positions 485-503 are enriched in basic and acidic residues; the sequence is CDQDFSEKGTEGKHKEPPV. Coiled-coil stretches lie at residues 674–778, 973–1114, and 1152–1299; these read KNEK…KALR, ISLR…MELL, and SESN…LKKM. Residue serine 1219 is modified to Phosphoserine. A Phosphothreonine modification is found at threonine 1334.

In terms of assembly, interacts with CEP250 and CEP68. Interacts with NEK2; the interaction leads to phosphorylation of CNTLN. In terms of processing, phosphorylated directly or indirectly by NEK2.

It is found in the cytoplasm. It localises to the cytoskeleton. The protein resides in the microtubule organizing center. Its subcellular location is the centrosome. The protein localises to the centriole. Its function is as follows. Required for centrosome cohesion and recruitment of CEP68 to centrosomes. This is Centlein from Mus musculus (Mouse).